The following is a 364-amino-acid chain: O-methyltransferase ZRP4 (364 aa).

Residues glycine 208, aspartate 231, aspartate 251, methionine 252, and lysine 265 each contribute to the S-adenosyl-L-methionine site. The Proton acceptor role is filled by histidine 269.

This sequence belongs to the class I-like SAM-binding methyltransferase superfamily. Cation-independent O-methyltransferase family. COMT subfamily. In terms of assembly, homodimer. Accumulates preferentially in the roots and is located predominantly in the region of the endodermis, low levels are seen in the leaves, stems and other shoot organs.

May be involved in the O-methylation of suberin phenylpropanoid precursors. In Zea mays (Maize), this protein is O-methyltransferase ZRP4 (ZRP4).